The primary structure comprises 1135 residues: Peroxisomal ATPase PEX6 (1135 aa).

853-860 (GPPGTGKT) lines the ATP pocket.

It belongs to the AAA ATPase family. As to quaternary structure, interacts with PEX1; forming the PEX1-PEX6 AAA ATPase complex, which is composed of a heterohexamer formed by a trimer of PEX1-PEX6 dimers.

It is found in the cytoplasm. The protein localises to the cytosol. Its subcellular location is the peroxisome membrane. The catalysed reaction is ATP + H2O = ADP + phosphate + H(+). Component of the PEX1-PEX6 AAA ATPase complex, a protein dislocase complex that mediates the ATP-dependent extraction of the PEX5 receptor from peroxisomal membranes, an essential step for PEX5 recycling. Specifically recognizes PEX5 monoubiquitinated at 'Cys-6', and pulls it out of the peroxisome lumen through the PEX2-PEX10-PEX12 retrotranslocation channel. Extraction by the PEX1-PEX6 AAA ATPase complex is accompanied by unfolding of the TPR repeats and release of bound cargo from PEX5. This is Peroxisomal ATPase PEX6 (PEX6) from Pichia angusta (Yeast).